The following is an 83-amino-acid chain: Translational regulator CsrA (83 aa).

This sequence belongs to the CsrA/RsmA family. In terms of assembly, homodimer; the beta-strands of each monomer intercalate to form a hydrophobic core, while the alpha-helices form wings that extend away from the core.

Its subcellular location is the cytoplasm. Its function is as follows. A translational regulator that binds mRNA to regulate translation initiation and/or mRNA stability. Usually binds in the 5'-UTR at or near the Shine-Dalgarno sequence preventing ribosome-binding, thus repressing translation. Its main target seems to be the major flagellin gene, while its function is anatagonized by FliW. The protein is Translational regulator CsrA of Thermotoga petrophila (strain ATCC BAA-488 / DSM 13995 / JCM 10881 / RKU-1).